Reading from the N-terminus, the 379-residue chain is 23S rRNA (uracil(747)-C(5))-methyltransferase RlmC (379 aa).

Residues C3, C11, C14, and C87 each coordinate [4Fe-4S] cluster. The S-adenosyl-L-methionine site is built by Q212, F241, E262, and N309. The active-site Nucleophile is the C336.

Belongs to the class I-like SAM-binding methyltransferase superfamily. RNA M5U methyltransferase family. RlmC subfamily.

The catalysed reaction is uridine(747) in 23S rRNA + S-adenosyl-L-methionine = 5-methyluridine(747) in 23S rRNA + S-adenosyl-L-homocysteine + H(+). Catalyzes the formation of 5-methyl-uridine at position 747 (m5U747) in 23S rRNA. The chain is 23S rRNA (uracil(747)-C(5))-methyltransferase RlmC from Shewanella loihica (strain ATCC BAA-1088 / PV-4).